The following is a 259-amino-acid chain: Tryptophan synthase alpha chain (259 aa).

Residues glutamate 35 and aspartate 46 each act as proton acceptor in the active site.

The protein belongs to the TrpA family. In terms of assembly, tetramer of two alpha and two beta chains.

It carries out the reaction (1S,2R)-1-C-(indol-3-yl)glycerol 3-phosphate + L-serine = D-glyceraldehyde 3-phosphate + L-tryptophan + H2O. It participates in amino-acid biosynthesis; L-tryptophan biosynthesis; L-tryptophan from chorismate: step 5/5. In terms of biological role, the alpha subunit is responsible for the aldol cleavage of indoleglycerol phosphate to indole and glyceraldehyde 3-phosphate. This Methanococcus vannielii (strain ATCC 35089 / DSM 1224 / JCM 13029 / OCM 148 / SB) protein is Tryptophan synthase alpha chain.